A 269-amino-acid polypeptide reads, in one-letter code: 23S rRNA (adenosine(1067)-2'-O)-methyltransferase (269 aa).

Residues Arg-135, Arg-165, Leu-195, Gly-218, Ile-238, and Leu-247 each coordinate S-adenosyl-L-methionine.

It belongs to the class IV-like SAM-binding methyltransferase superfamily. RNA methyltransferase TsnR/AvirB family. Homodimer.

It catalyses the reaction adenosine(1067) in 23S rRNA + S-adenosyl-L-methionine = 2'-O-methyladenosine(1067) in 23S rRNA + S-adenosyl-L-homocysteine + H(+). In terms of biological role, specifically methylates the adenosine-1067 in 23S ribosomal RNA. Confers resistance to antibiotic thiostrepton. This is 23S rRNA (adenosine(1067)-2'-O)-methyltransferase (tsnR) from Streptomyces azureus.